A 439-amino-acid polypeptide reads, in one-letter code: C4-dicarboxylate transport protein 1 (439 aa).

6 helical membrane passes run 18–38 (VLYI…WLWP), 56–76 (LIKM…IAHV), 91–111 (IYFE…ANVI), 157–177 (GEIL…MSLG), 193–213 (AIFG…FGAM), and 231–251 (LIAT…GIIA).

The protein belongs to the dicarboxylate/amino acid:cation symporter (DAACS) (TC 2.A.23) family.

Its subcellular location is the cell inner membrane. Responsible for the transport of dicarboxylates such as succinate, fumarate, and malate from the periplasm across the membrane. The protein is C4-dicarboxylate transport protein 1 of Bradyrhizobium sp. (strain ORS 278).